Consider the following 158-residue polypeptide: Protein shisa-like-2B (158 aa).

Residues I65 to V85 traverse the membrane as a helical segment.

The protein belongs to the shisa family.

The protein localises to the membrane. The chain is Protein shisa-like-2B (Shisal2b) from Mus musculus (Mouse).